We begin with the raw amino-acid sequence, 599 residues long: Beta-(1--&gt;2)glucan export ATP-binding/permease protein NdvA (599 aa).

The region spanning 21–311 (GWILAVANLL…VVNFINNVLM (291 aa)) is the ABC transmembrane type-1 domain. A run of 6 helical transmembrane segments spans residues 22–42 (WILA…PILF), 68–88 (LLGA…LVAL), 146–166 (EHFA…YINW), 168–188 (LAIL…LVVH), 254–274 (VITR…GIYL), and 276–296 (QQGL…TLLI). One can recognise an ABC transporter domain in the interval 345–579 (VEFQNVSFSY…GGAFAQLARA (235 aa)). Position 378 to 385 (378 to 385 (GATGAGKS)) interacts with ATP.

Belongs to the ABC transporter superfamily. Beta-(1--&gt;2)glucan exporter (TC 3.A.1.108.1) family. Homodimer.

It localises to the cell inner membrane. The enzyme catalyses [(1-&gt;2)-beta-D-glucosyl](n)(in) + ATP + H2O = [(1-&gt;2)-beta-D-glucosyl](n)(out) + ADP + phosphate + H(+). Its function is as follows. Involved in beta-(1--&gt;2)glucan export. Transmembrane domains (TMD) form a pore in the inner membrane and the ATP-binding domain (NBD) is responsible for energy generation. The protein is Beta-(1--&gt;2)glucan export ATP-binding/permease protein NdvA of Rhodopseudomonas palustris (strain ATCC BAA-98 / CGA009).